The chain runs to 548 residues: Chaperonin GroEL (548 aa).

ATP contacts are provided by residues 30-33 (TLGP), Lys-51, 87-91 (DGTTT), Gly-415, 479-481 (NAA), and Asp-495.

This sequence belongs to the chaperonin (HSP60) family. As to quaternary structure, forms a cylinder of 14 subunits composed of two heptameric rings stacked back-to-back. Interacts with the co-chaperonin GroES.

Its subcellular location is the cytoplasm. It carries out the reaction ATP + H2O + a folded polypeptide = ADP + phosphate + an unfolded polypeptide.. Together with its co-chaperonin GroES, plays an essential role in assisting protein folding. The GroEL-GroES system forms a nano-cage that allows encapsulation of the non-native substrate proteins and provides a physical environment optimized to promote and accelerate protein folding. The protein is Chaperonin GroEL of Ectopseudomonas mendocina (strain ymp) (Pseudomonas mendocina).